The chain runs to 209 residues: uncharacterized protein (209 aa).

4Fe-4S ferredoxin-type domains lie at 38-67, 63-92, 90-119, 122-151, 145-174, and 179-209; these read KTKP…IFSF, KIFS…KDRF, DRFT…KEIP, KTPV…EINP, INKE…TPDE, and LIVK…HRES. Positions 47, 50, 53, 57, 72, 75, 78, 82, 99, 102, 105, and 109 each coordinate [4Fe-4S] cluster. The [4Fe-4S] cluster site is built by Cys154, Cys157, Cys160, Cys164, Cys188, Cys191, Cys194, and Cys198.

This is an uncharacterized protein from Methanocaldococcus jannaschii (strain ATCC 43067 / DSM 2661 / JAL-1 / JCM 10045 / NBRC 100440) (Methanococcus jannaschii).